The primary structure comprises 166 residues: KH homology domain-containing protein 1A (166 aa).

The region spanning 19–78 (PLVFDMEEDKEDYIFGPHDEYLHTLEVHSNTLIQLERWFTPTGQTRVTVVGPLKARLWVM) is the KH; atypical domain.

It belongs to the KHDC1 family.

The protein resides in the cytoplasm. Functionally, has pro-apoptotic activity. The protein is KH homology domain-containing protein 1A (Khdc1a) of Mus musculus (Mouse).